The sequence spans 39 residues: Photosystem I reaction center subunit IX (39 aa).

The helical transmembrane segment at 7-27 (FLTTAPVAFILFSSFVFALFI) threads the bilayer.

This sequence belongs to the PsaJ family.

The protein resides in the cellular thylakoid membrane. Functionally, may help in the organization of the PsaE and PsaF subunits. The polypeptide is Photosystem I reaction center subunit IX (Synechococcus sp. (strain JA-2-3B'a(2-13)) (Cyanobacteria bacterium Yellowstone B-Prime)).